Reading from the N-terminus, the 387-residue chain is G2/mitotic-specific cyclin-B2 (387 aa).

The protein belongs to the cyclin family. Cyclin AB subfamily. As to quaternary structure, interacts with the CDK1 protein kinase to form a serine/threonine kinase holoenzyme complex also known as maturation promoting factor (MPF). The cyclin subunit imparts substrate specificity to the complex.

Essential for the control of the cell cycle at the G2/M (mitosis) transition. The sequence is that of G2/mitotic-specific cyclin-B2 (ccnb2) from Oryzias latipes (Japanese rice fish).